The primary structure comprises 249 residues: Small ribosomal subunit protein uS2 (249 aa).

This sequence belongs to the universal ribosomal protein uS2 family.

In Chlorobaculum tepidum (strain ATCC 49652 / DSM 12025 / NBRC 103806 / TLS) (Chlorobium tepidum), this protein is Small ribosomal subunit protein uS2.